The sequence spans 149 residues: MDNDKKDKIILSGELTNHRFNFTKDGENGYSAYEVDRFLDQLVHTLTHYEAQRNREEEMKTAYEKLFQDRDEILKRCSKLEAELNNFYENGYSNRVLISRVQALENKIESLPSGQNDRLERIEKLLKRVIKHWTDGEDLSYGDFDDDFF.

This is an uncharacterized protein from Mycoplasma pneumoniae (strain ATCC 29342 / M129 / Subtype 1) (Mycoplasmoides pneumoniae).